Here is an 820-residue protein sequence, read N- to C-terminus: Sodium/hydrogen exchanger 1 (820 aa).

The Extracellular portion of the chain corresponds to 1–102; it reads MMLRWSGIWG…FPVLDIDYLH (102 aa). The interval 44-71 is disordered; that stretch reads ASTIRGSEPPRERSIGDVTTAPSEPLHH. The helical transmembrane segment at 103-125 threads the bilayer; sequence VRTPFEISLWILLACLMKIGFHV. Residues 126–134 are Cytoplasmic-facing; it reads IPTISSIVP. The chain crosses the membrane as a helical span at residues 135-152; it reads ESCLLIVVGLLVGGLIKG. At 153 to 162 the chain is on the extracellular side; sequence VGETPPFLQS. A helical transmembrane segment spans residues 163-180; sequence DVFFLFLLPPIILDAGYF. Residues 181–190 are Cytoplasmic-facing; the sequence is LPLRQFTENL. The chain crosses the membrane as a helical span at residues 191-219; the sequence is GTILIFAVVGTLWNAFFLGGLLYAVCLVG. Topologically, residues 220–226 are extracellular; the sequence is GEQINNI. The chain crosses the membrane as a helical span at residues 227–253; that stretch reads GLLDTLLFGSIISAVDPVAVLAVFEEI. At 254-256 the chain is on the cytoplasmic side; that stretch reads HIN. The helical transmembrane segment at 257–287 threads the bilayer; sequence ELLHILVFGESLLNDAVTVVLYHLFEEFASY. Residues 288-291 are Extracellular-facing; that stretch reads EYVG. The chain crosses the membrane as a helical span at residues 292–326; it reads ISDIFLGFLSFFVVSLGGVFVGVVYGVIAAFTSRF. The Cytoplasmic segment spans residues 327–332; the sequence is TSHIRV. Residues 333–345 traverse the membrane as a helical segment; sequence IEPLFVFLYSYMA. Residues 346–354 lie on the Extracellular side of the membrane; that stretch reads YLSAELFHL. The helical transmembrane segment at 355–375 threads the bilayer; the sequence is SGIMALIASGVVMRPYVEANI. Residues 376–377 are Cytoplasmic-facing; sequence SH. A helical membrane pass occupies residues 378-408; sequence KSHTTIKYFLKMWSSVSETLIFIFLGVSTVA. Residues 409–414 are Extracellular-facing; that stretch reads GSHQWN. The helical transmembrane segment at 415 to 442 threads the bilayer; the sequence is WTFVISTLLFCLIARVLGVLVLTWFINK. Residues 443 to 448 are Cytoplasmic-facing; the sequence is FRIVKL. The chain crosses the membrane as a helical span at residues 449 to 473; that stretch reads TPKDQFIIAYGGLRGAIAFSLGYLL. The Extracellular portion of the chain corresponds to 474–479; it reads DKKHFP. The chain crosses the membrane as a helical span at residues 480-509; it reads MCDLFLTAIITVIFFTVFVQGMTIRPLVDL. The interaction with TESC stretch occupies residues 505–571; the sequence is PLVDLLAVKK…VKKCLIAGER (67 aa). Residues 510–820 lie on the Cytoplasmic side of the membrane; the sequence is LAVKKKQETK…EGEPFIPKGQ (311 aa). The PI(4,5)P2-binding region stretch occupies residues 513-520; it reads KKKQETKR. Residues 519–549 are interaction with CHP2; that stretch reads KRSINEEIHTQFLDHLLTGIEDICGHYGHHH. The confers pH-dependent PI(4,5)P2 binding stretch occupies residues 544–549; that stretch reads HYGHHH. The PI(4,5)P2-binding region stretch occupies residues 556–564; it reads RFNKKYVKK. A phosphoserine mark is found at Ser603 and Ser606. At Thr607 the chain carries Phosphothreonine. 2 positions are modified to phosphoserine: Ser609 and Ser652. The interval 637–820 is interaction with TESC; the sequence is KILRSNLQKT…EGEPFIPKGQ (184 aa). The interval 637–820 is interaction with CALM1; the sequence is KILRSNLQKT…EGEPFIPKGQ (184 aa). Residues 688 to 691 form an interaction with PPP3CA region; it reads LTVP. A phosphoserine mark is found at Ser697, Ser701, and Ser707. Residues 719-724 form an interaction with PPP3CA region; that stretch reads PVITID. Ser727, Ser730, and Ser733 each carry phosphoserine. Residues 747 to 820 are disordered; sequence GLKRGPRTTP…EGEPFIPKGQ (74 aa). Phosphothreonine occurs at positions 755 and 784. A phosphoserine mark is found at Ser790 and Ser801.

The protein belongs to the monovalent cation:proton antiporter 1 (CPA1) transporter (TC 2.A.36) family. Homodimer; dimerization is crucial for its function. Oligomer. Interacts with CALM1 in a calcium-dependent manner. Interacts with TESC. Interacts (via residues 504-563) with CHP1. The interaction with CHP1 occurs at the plasma membrane in a calcium-dependent manner. Interacts with CHP2. The interaction with CHP2 occurs in a calcium-dependent manner. Interacts with EZR; regulates the cytoskeletal interactions of SLC9A1 and promotes stress fiber formation. In terms of processing, N-glycosylated and O-glycosylated in the N-terminal region. Ubiquitinated, leading to its degradation by the proteasome. Ubiquitination is reduced by CHP1. Post-translationally, palmitoylated; may play a major role in SLC9A1 regulation. In terms of processing, phosphorylation at Thr-784 increases SLC9A1 activity; specifically dephosphorylated by PPP3CA. Specifically dephosphorylated at Thr-784 by PPP3CA that negatively regulates SLC9A1 activity. Phosphorylation at Ser-652 by AKT1 reduces SLC9A1 binding to CALM1. As to expression, widely expressed.

The protein resides in the cell membrane. It localises to the basolateral cell membrane. The catalysed reaction is Na(+)(in) + H(+)(out) = Na(+)(out) + H(+)(in). It carries out the reaction Li(+)(out) + H(+)(in) = Li(+)(in) + H(+)(out). The enzyme catalyses Li(+)(in) + Na(+)(out) = Li(+)(out) + Na(+)(in). Activated at acidic pHs. Inhibited by cariporide and eniporide. Inhibited by amiloride and 5-amino-substituted derivatives. Phosphatidylinositol 4,5-bisphosphate (PI(4,5)P2) bind and activates SLC9A1 transporter activity. Functionally, electroneutral Na(+) /H(+) antiporter that extrudes Na(+) in exchange for external protons driven by the inward sodium ion chemical gradient, protecting cells from acidification that occurs from metabolism. Exchanges intracellular H(+) ions for extracellular Na(+) in 1:1 stoichiometry. Plays a key role in maintening intracellular pH neutral and cell volume, and thus is important for cell growth, proliferation, migration and survival. In addition, can transport lithium Li(+) and also functions as a Na(+)/Li(+) antiporter. SLC9A1 also functions in membrane anchoring and organization of scaffolding complexes that coordinate signaling inputs. This is Sodium/hydrogen exchanger 1 (Slc9a1) from Rattus norvegicus (Rat).